The primary structure comprises 495 residues: Glycerol kinase (495 aa).

An ADP-binding site is contributed by threonine 13. Threonine 13, threonine 14, and serine 15 together coordinate ATP. Residue threonine 13 coordinates sn-glycerol 3-phosphate. ADP is bound at residue arginine 17. Sn-glycerol 3-phosphate is bound by residues arginine 83, glutamate 84, tyrosine 135, and aspartate 244. Arginine 83, glutamate 84, tyrosine 135, aspartate 244, and glutamine 245 together coordinate glycerol. Residues threonine 266 and glycine 309 each contribute to the ADP site. ATP-binding residues include threonine 266, glycine 309, glutamine 313, and glycine 410. 2 residues coordinate ADP: glycine 410 and asparagine 414.

Belongs to the FGGY kinase family.

The catalysed reaction is glycerol + ATP = sn-glycerol 3-phosphate + ADP + H(+). The protein operates within polyol metabolism; glycerol degradation via glycerol kinase pathway; sn-glycerol 3-phosphate from glycerol: step 1/1. With respect to regulation, inhibited by fructose 1,6-bisphosphate (FBP). Key enzyme in the regulation of glycerol uptake and metabolism. Catalyzes the phosphorylation of glycerol to yield sn-glycerol 3-phosphate. The chain is Glycerol kinase from Shewanella sediminis (strain HAW-EB3).